The following is a 485-amino-acid chain: Cysteine--tRNA ligase (485 aa).

Cysteine 27 serves as a coordination point for Zn(2+). Residues isoleucine 29–histidine 39 carry the 'HIGH' region motif. 3 residues coordinate Zn(2+): cysteine 208, histidine 233, and glutamate 237. A 'KMSKS' region motif is present at residues lysine 265 to serine 269. ATP is bound at residue lysine 268.

It belongs to the class-I aminoacyl-tRNA synthetase family. As to quaternary structure, monomer. It depends on Zn(2+) as a cofactor.

It is found in the cytoplasm. It catalyses the reaction tRNA(Cys) + L-cysteine + ATP = L-cysteinyl-tRNA(Cys) + AMP + diphosphate. The protein is Cysteine--tRNA ligase of Nitratidesulfovibrio vulgaris (strain DP4) (Desulfovibrio vulgaris).